Reading from the N-terminus, the 208-residue chain is 3-demethoxyubiquinol 3-hydroxylase (208 aa).

Residues Glu-57, Glu-87, His-90, Glu-139, Glu-171, and His-174 each contribute to the Fe cation site.

It belongs to the COQ7 family. Fe cation is required as a cofactor.

Its subcellular location is the cell membrane. The enzyme catalyses a 5-methoxy-2-methyl-3-(all-trans-polyprenyl)benzene-1,4-diol + AH2 + O2 = a 3-demethylubiquinol + A + H2O. Its pathway is cofactor biosynthesis; ubiquinone biosynthesis. Its function is as follows. Catalyzes the hydroxylation of 2-nonaprenyl-3-methyl-6-methoxy-1,4-benzoquinol during ubiquinone biosynthesis. The polypeptide is 3-demethoxyubiquinol 3-hydroxylase (Burkholderia thailandensis (strain ATCC 700388 / DSM 13276 / CCUG 48851 / CIP 106301 / E264)).